The sequence spans 433 residues: Serine hydroxymethyltransferase (433 aa).

121–123 (AHV) is a binding site for (6S)-5,6,7,8-tetrahydrofolate. K227 is modified (N6-(pyridoxal phosphate)lysine). Position 243 (E243) interacts with (6S)-5,6,7,8-tetrahydrofolate.

The protein belongs to the SHMT family. As to quaternary structure, homodimer. It depends on pyridoxal 5'-phosphate as a cofactor.

It is found in the cytoplasm. It catalyses the reaction 5,10-methylenetetrahydrosulfopterin + glycine + H2O = tetrahydrosulfopterin + L-serine. The protein operates within amino-acid biosynthesis; glycine biosynthesis; glycine from L-serine: step 1/1. Its activity is regulated as follows. Is completely inhibited by addition of NaCNBH(3) in vitro; this reagent is a known inhibitor of PLP enzymes, that reduces the internal aldimine of PLP to the catalytically inactive and stable secondary amine. Is also inhibited by L-cysteine, which forms a thiazolidine complex with the active site PLP. Catalyzes the reversible interconversion of serine and glycine with the modified folate sulfopterin serving as the one-carbon carrier. Cannot use tetrahydrofolate (THF or H4PteGlu) as the pteridine substrate. Also exhibits a pteridine-independent aldolase activity toward beta-hydroxyamino acids, producing glycine and aldehydes, via a retro-aldol mechanism. Thus, is able to catalyze the cleavage of both allo-threonine and beta-phenylserine. The chain is Serine hydroxymethyltransferase from Saccharolobus solfataricus (strain ATCC 35092 / DSM 1617 / JCM 11322 / P2) (Sulfolobus solfataricus).